Reading from the N-terminus, the 756-residue chain is 1-phosphatidylinositol 4,5-bisphosphate phosphodiesterase delta-1 (756 aa).

In terms of domain architecture, PH spans 21 to 130 (ALLKGSQLLK…WVQGLRKIIH (110 aa)). The interval 30–57 (KVKSSSWRRERFYKLQEDCKTIWQESRK) is substrate binding. EF-hand domains lie at 140-175 (KLQH…LNIQ) and 176-211 (VDDG…LTQR). Positions 153, 155, 157, 159, 164, 189, 191, 193, 195, and 200 each coordinate Ca(2+). Ser-191 is a glycosylation site (O-linked (GlcNAc) serine). O-linked (GlcNAc) threonine glycosylation occurs at Thr-193. Positions 296 to 440 (QDMDQPLSHY…LKGKILLKGK (145 aa)) constitute a PI-PLC X-box domain. His-311 is an active-site residue. Ca(2+) is bound by residues Asn-312, Glu-341, and Asp-343. His-356 is a catalytic residue. Glu-390 contacts Ca(2+). Substrate contacts are provided by Lys-438 and Lys-440. Thr-457 bears the Phosphothreonine mark. At Ser-460 the chain carries Phosphoserine. The 118-residue stretch at 492–609 (LSDMIIYCKS…GYVLKPAFLR (118 aa)) folds into the PI-PLC Y-box domain. Residues Ser-522 and Arg-549 each contribute to the substrate site. Positions 609-737 (RDPNTTFNSR…QGYRHVHLLS (129 aa)) constitute a C2 domain. Ile-651, Asp-653, Asn-677, Asp-706, Tyr-707, and Asp-708 together coordinate Ca(2+).

Interacts with TGM2. The cofactor is Ca(2+).

The enzyme catalyses a 1,2-diacyl-sn-glycero-3-phospho-(1D-myo-inositol-4,5-bisphosphate) + H2O = 1D-myo-inositol 1,4,5-trisphosphate + a 1,2-diacyl-sn-glycerol + H(+). It catalyses the reaction a 1,2-diacyl-sn-glycero-3-phospho-(1D-myo-inositol) + H2O = 1D-myo-inositol 1-phosphate + a 1,2-diacyl-sn-glycerol + H(+). Functionally, the production of the second messenger molecules diacylglycerol (DAG) and inositol 1,4,5-trisphosphate (IP3) is mediated by activated phosphatidylinositol-specific phospholipase C enzymes. Essential for trophoblast and placental development. Binds phosphatidylinositol 4,5-bisphosphate. This chain is 1-phosphatidylinositol 4,5-bisphosphate phosphodiesterase delta-1, found in Rattus norvegicus (Rat).